A 266-amino-acid chain; its full sequence is Thymidylate synthase (266 aa).

Arginine 24 lines the dUMP pocket. A (6R)-5,10-methylene-5,6,7,8-tetrahydrofolate-binding site is contributed by histidine 54. DUMP is bound at residue 129-130; it reads RR. The active-site Nucleophile is the cysteine 149. DUMP-binding positions include 169–172, asparagine 180, and 210–212; these read RSAD and HIY. Aspartate 172 lines the (6R)-5,10-methylene-5,6,7,8-tetrahydrofolate pocket. Alanine 265 serves as a coordination point for (6R)-5,10-methylene-5,6,7,8-tetrahydrofolate.

The protein belongs to the thymidylate synthase family. Bacterial-type ThyA subfamily. As to quaternary structure, homodimer.

It localises to the cytoplasm. The enzyme catalyses dUMP + (6R)-5,10-methylene-5,6,7,8-tetrahydrofolate = 7,8-dihydrofolate + dTMP. The protein operates within pyrimidine metabolism; dTTP biosynthesis. Catalyzes the reductive methylation of 2'-deoxyuridine-5'-monophosphate (dUMP) to 2'-deoxythymidine-5'-monophosphate (dTMP) while utilizing 5,10-methylenetetrahydrofolate (mTHF) as the methyl donor and reductant in the reaction, yielding dihydrofolate (DHF) as a by-product. This enzymatic reaction provides an intracellular de novo source of dTMP, an essential precursor for DNA biosynthesis. This Mycobacterium leprae (strain TN) protein is Thymidylate synthase.